The primary structure comprises 280 residues: Ribosomal RNA small subunit methyltransferase A (280 aa).

The S-adenosyl-L-methionine site is built by Leu-24, Gly-49, Glu-70, Asp-95, and Asn-118.

This sequence belongs to the class I-like SAM-binding methyltransferase superfamily. rRNA adenine N(6)-methyltransferase family. RsmA subfamily.

It is found in the cytoplasm. It carries out the reaction adenosine(1518)/adenosine(1519) in 16S rRNA + 4 S-adenosyl-L-methionine = N(6)-dimethyladenosine(1518)/N(6)-dimethyladenosine(1519) in 16S rRNA + 4 S-adenosyl-L-homocysteine + 4 H(+). Specifically dimethylates two adjacent adenosines (A1518 and A1519) in the loop of a conserved hairpin near the 3'-end of 16S rRNA in the 30S particle. May play a critical role in biogenesis of 30S subunits. In Syntrophus aciditrophicus (strain SB), this protein is Ribosomal RNA small subunit methyltransferase A.